The chain runs to 159 residues: MKCPFCHTPDTSVIDSRVSEEGDRIRRRRRCPHCDKRFTTYETVELRLPQVVKQDGNRAEFDREKLRTGFVRALHKRPVSAEDVEAAMNRVVQKLLSLGEREIASHKIGEMVMGELYKLDKVAYIRFASVYRSFQGAADFDDAIRELQGSDSRKEPDKP.

The segment at 3–34 (CPFCHTPDTSVIDSRVSEEGDRIRRRRRCPHC) is a zinc-finger region. Residues 49–139 (PQVVKQDGNR…VYRSFQGAAD (91 aa)) form the ATP-cone domain.

The protein belongs to the NrdR family. Zn(2+) is required as a cofactor.

Negatively regulates transcription of bacterial ribonucleotide reductase nrd genes and operons by binding to NrdR-boxes. The chain is Transcriptional repressor NrdR from Nitrosospira multiformis (strain ATCC 25196 / NCIMB 11849 / C 71).